Consider the following 376-residue polypeptide: tRNA-specific 2-thiouridylase MnmA (376 aa).

Residues Gly-10–Ser-17 and Met-36 each bind ATP. Residues Asn-96–Asp-98 are interaction with target base in tRNA. Catalysis depends on Cys-101, which acts as the Nucleophile. A disulfide bridge connects residues Cys-101 and Cys-198. Gly-125 contributes to the ATP binding site. The segment at Lys-148–Gln-150 is interaction with tRNA. The active-site Cysteine persulfide intermediate is Cys-198. The tract at residues Arg-305–Tyr-306 is interaction with tRNA.

Belongs to the MnmA/TRMU family.

The protein localises to the cytoplasm. It catalyses the reaction S-sulfanyl-L-cysteinyl-[protein] + uridine(34) in tRNA + AH2 + ATP = 2-thiouridine(34) in tRNA + L-cysteinyl-[protein] + A + AMP + diphosphate + H(+). Its function is as follows. Catalyzes the 2-thiolation of uridine at the wobble position (U34) of tRNA, leading to the formation of s(2)U34. The sequence is that of tRNA-specific 2-thiouridylase MnmA from Protochlamydia amoebophila (strain UWE25).